The sequence spans 448 residues: Nucleoprotein (448 aa).

The interval 1-55 (MSFTPGKQSSSRASSGNRSGNGILKWADQSDQSRNVQTRGRRAQPKQTATSQQPS) is disordered. The segment covering 9-22 (SSSRASSGNRSGNG) has biased composition (low complexity). Polar residues-rich tracts occupy residues 29–38 (QSDQSRNVQT) and 45–55 (PKQTATSQQPS). Residues 52 to 194 (QQPSGGNVVP…GYYIEGSGRS (143 aa)) form an RNA-binding region. The CoV N NTD domain maps to 61 to 190 (PYYSWFSGIT…VLPQGYYIEG (130 aa)). 3 residues coordinate RNA: Arg-106, Arg-122, and Arg-164. Disordered regions lie at residues 157–231 (TPAD…VTPD), 266–297 (ILNK…NFGG), and 385–448 (GMMN…TSEI). Residue Ser-167 is modified to Phosphoserine; by host. Thr-174 is modified (phosphothreonine; by host). A Phosphoserine; by host modification is found at Ser-191. Residues 193–223 (RSAPNSRSTSRASSRASSAGSRSRANSGNRT) show a composition bias toward low complexity. In terms of domain architecture, CoV N CTD spans 259–384 (AKEIRQKILN…ENLNAYQQQD (126 aa)). Positions 266–276 (ILNKPRQKRSP) are enriched in basic residues. Residues 266 to 384 (ILNKPRQKRS…ENLNAYQQQD (119 aa)) form a dimerization region. Position 390 is a phosphoserine; by host (Ser-390). The segment covering 399–409 (QKNGQGENDNI) has biased composition (polar residues). Residues 422-439 (KSRELTAEDISLLKKMDE) show a composition bias toward basic and acidic residues. A Phosphoserine; by host modification is found at Ser-423. Phosphothreonine; by host is present on Thr-427.

It belongs to the betacoronavirus nucleocapsid protein family. In terms of assembly, homooligomer. Both monomeric and oligomeric forms interact with RNA. Interacts with protein M. Interacts with NSP3; this interaction serves to tether the genome to the newly translated replicase-transcriptase complex at a very early stage of infection. In terms of processing, ADP-ribosylated. The ADP-ribosylation is retained in the virion during infection. Phosphorylated on serine and threonine residues.

Its subcellular location is the virion. The protein localises to the host endoplasmic reticulum-Golgi intermediate compartment. It is found in the host Golgi apparatus. Its function is as follows. Packages the positive strand viral genome RNA into a helical ribonucleocapsid (RNP) and plays a fundamental role during virion assembly through its interactions with the viral genome and membrane protein M. Plays an important role in enhancing the efficiency of subgenomic viral RNA transcription as well as viral replication. This Bovine coronavirus (strain OK-0514) (BCoV) protein is Nucleoprotein.